The sequence spans 389 residues: 1-deoxy-D-xylulose 5-phosphate reductoisomerase (389 aa).

Residues S11, G12, S13, V14, N39, and N122 each coordinate NADPH. K123 provides a ligand contact to 1-deoxy-D-xylulose 5-phosphate. Residue E124 coordinates NADPH. Mn(2+) is bound at residue D148. 1-deoxy-D-xylulose 5-phosphate-binding residues include S149, E150, S174, and H197. E150 contributes to the Mn(2+) binding site. Residue G203 participates in NADPH binding. Residues S210, N215, K216, and E219 each contribute to the 1-deoxy-D-xylulose 5-phosphate site. Mn(2+) is bound at residue E219.

It belongs to the DXR family. Mg(2+) serves as cofactor. Mn(2+) is required as a cofactor.

It carries out the reaction 2-C-methyl-D-erythritol 4-phosphate + NADP(+) = 1-deoxy-D-xylulose 5-phosphate + NADPH + H(+). It participates in isoprenoid biosynthesis; isopentenyl diphosphate biosynthesis via DXP pathway; isopentenyl diphosphate from 1-deoxy-D-xylulose 5-phosphate: step 1/6. Functionally, catalyzes the NADPH-dependent rearrangement and reduction of 1-deoxy-D-xylulose-5-phosphate (DXP) to 2-C-methyl-D-erythritol 4-phosphate (MEP). The sequence is that of 1-deoxy-D-xylulose 5-phosphate reductoisomerase from Leptospira borgpetersenii serovar Hardjo-bovis (strain JB197).